The primary structure comprises 66 residues: Large ribosomal subunit protein uL29 (66 aa).

The protein belongs to the universal ribosomal protein uL29 family.

This is Large ribosomal subunit protein uL29 from Lysinibacillus sphaericus (strain C3-41).